Reading from the N-terminus, the 276-residue chain is MAIRSYRILTPDTHNRSVSGFDGRVQLDPQKKLTSGQHHCGKGRNARGIITARHRGGGHKRLYRQIDFRRDKEHISGEIVTIEYDPNRSAYICKVHYKNGDKMYILHPRGVMIGDTILSGPKAPISIGNVLPLTNMPLGTAIHNIEITLGKGGQLARAAGAVAELIAKEDRSATLRLPSGEVRLISENCSATIGQVGNITANNRSFGKAGAKRWLGKRSEVRGVAMNPVDHPHGGGEGRTPIGRKKPVTPWGYSALGKKSRKRNRYSDASILRRRE.

The segment at 225–276 (AMNPVDHPHGGGEGRTPIGRKKPVTPWGYSALGKKSRKRNRYSDASILRRRE) is disordered.

The protein belongs to the universal ribosomal protein uL2 family. As to quaternary structure, part of the 50S ribosomal subunit.

It is found in the plastid. It localises to the chloroplast. In Pinus koraiensis (Korean pine), this protein is Large ribosomal subunit protein uL2c (rpl2).